A 152-amino-acid chain; its full sequence is Ribosomal RNA large subunit methyltransferase H (152 aa).

S-adenosyl-L-methionine contacts are provided by residues L70, G102, and 120 to 125; that span reads LSPMTF.

This sequence belongs to the RNA methyltransferase RlmH family. In terms of assembly, homodimer.

It localises to the cytoplasm. It catalyses the reaction pseudouridine(1915) in 23S rRNA + S-adenosyl-L-methionine = N(3)-methylpseudouridine(1915) in 23S rRNA + S-adenosyl-L-homocysteine + H(+). Its function is as follows. Specifically methylates the pseudouridine at position 1915 (m3Psi1915) in 23S rRNA. The chain is Ribosomal RNA large subunit methyltransferase H from Pelobacter propionicus (strain DSM 2379 / NBRC 103807 / OttBd1).